The chain runs to 156 residues: Cell division protein SepF (156 aa).

Belongs to the SepF family. In terms of assembly, homodimer. Interacts with FtsZ.

It is found in the cytoplasm. In terms of biological role, cell division protein that is part of the divisome complex and is recruited early to the Z-ring. Probably stimulates Z-ring formation, perhaps through the cross-linking of FtsZ protofilaments. Its function overlaps with FtsA. The chain is Cell division protein SepF from Ruminiclostridium cellulolyticum (strain ATCC 35319 / DSM 5812 / JCM 6584 / H10) (Clostridium cellulolyticum).